The sequence spans 767 residues: GPI ethanolamine phosphate transferase 2 (767 aa).

N-linked (GlcNAc...) asparagine glycosylation is found at Asn-186 and Asn-401. Helical transmembrane passes span 407–427 and 434–454; these read LGLF…YGLG and VTFL…SSYV. Asn-490 is a glycosylation site (N-linked (GlcNAc...) asparagine). 3 helical membrane-spanning segments follow: residues 513-533, 538-558, and 595-615; these read ILWA…CLNS, IWRS…LVFV, and IPIF…KMSA. N-linked (GlcNAc...) asparagine glycosylation occurs at Asn-627. 3 helical membrane-spanning segments follow: residues 655–675, 695–715, and 733–755; these read SVVL…IWWA, TLLT…CTML, and LAWT…SQVL.

This sequence belongs to the PIGG/PIGN/PIGO family. PIGG subfamily.

It is found in the endoplasmic reticulum membrane. Its pathway is glycolipid biosynthesis; glycosylphosphatidylinositol-anchor biosynthesis. Functionally, ethanolamine phosphate transferase involved in glycosylphosphatidylinositol-anchor biosynthesis. Transfers ethanolamine phosphate to the GPI second mannose. This is GPI ethanolamine phosphate transferase 2 (las21) from Aspergillus fumigatus (strain ATCC MYA-4609 / CBS 101355 / FGSC A1100 / Af293) (Neosartorya fumigata).